A 205-amino-acid polypeptide reads, in one-letter code: Protein-L-isoaspartate O-methyltransferase (205 aa).

The active site involves Ser56.

This sequence belongs to the methyltransferase superfamily. L-isoaspartyl/D-aspartyl protein methyltransferase family.

It is found in the cytoplasm. The catalysed reaction is [protein]-L-isoaspartate + S-adenosyl-L-methionine = [protein]-L-isoaspartate alpha-methyl ester + S-adenosyl-L-homocysteine. In terms of biological role, catalyzes the methyl esterification of L-isoaspartyl residues in peptides and proteins that result from spontaneous decomposition of normal L-aspartyl and L-asparaginyl residues. It plays a role in the repair and/or degradation of damaged proteins. The polypeptide is Protein-L-isoaspartate O-methyltransferase (Pyrobaculum aerophilum (strain ATCC 51768 / DSM 7523 / JCM 9630 / CIP 104966 / NBRC 100827 / IM2)).